The sequence spans 251 residues: Fibroblast growth factor 23 (251 aa).

A signal peptide spans 1 to 24 (MLGARLRLWVCALCSVCSMSVLRA). A disulfide bridge connects residues Cys-95 and Cys-113. O-linked (GalNAc) threonine glycans are attached at residues Thr-171 and Thr-178. The disordered stretch occupies residues 172–221 (PIPRRHTRSAEDDSERDPLNVLKPRARMTPAPASCSQELPSAEDNSPMAS). The residue at position 180 (Ser-180) is a Phosphoserine; by FAM20C. Over residues 205–219 (SCSQELPSAEDNSPM) the composition is skewed to polar residues.

It belongs to the heparin-binding growth factors family. In terms of assembly, interacts with FGFR1, FGFR2, FGFR3 and FGFR4. Affinity between fibroblast growth factors (FGFs) and their receptors is increased by KL and heparan sulfate glycosaminoglycans that function as coreceptors. In terms of processing, following secretion this protein is inactivated by cleavage into a N-terminal fragment and a C-terminal fragment. The processing is effected by proprotein convertases. O-glycosylated at Thr-171 and Thr-178 by GALNT3 and glycosylation of Thr-178 requires previous glycosylation at Thr171. Glycosylation is necessary for secretion; it blocks processing by proprotein convertases when the O-glycan is alpha 2,6-sialylated. Competition between proprotein convertase cleavage and block of cleavage by O-glycosylation determines the level of secreted active FGF23. Post-translationally, phosphorylation at Ser-180 mediated by FAM20C slows down glycosylation at Thr-178 notably. Expressed in osteogenic cells particularly during phases of active bone remodeling. In adult trabecular bone, expressed in osteocytes and flattened bone-lining cells (inactive osteoblasts).

It localises to the secreted. Regulator of phosphate homeostasis. Inhibits renal tubular phosphate transport by reducing SLC34A1 levels. Up-regulates EGR1 expression in the presence of KL. Acts directly on the parathyroid to decrease PTH secretion. Regulator of vitamin-D metabolism. Negatively regulates osteoblast differentiation and matrix mineralization. This Homo sapiens (Human) protein is Fibroblast growth factor 23 (FGF23).